We begin with the raw amino-acid sequence, 770 residues long: Signal transducer and activator of transcription 3 (770 aa).

Ala2 carries the post-translational modification N-acetylalanine. 2 positions are modified to N6-acetyllysine: Lys49 and Lys87. The short motif at 150 to 162 (DVRKRVQDLEQKM) is the Essential for nuclear import element. The 91-residue stretch at 580–670 (WNEGYIMGFI…DATNILVSPL (91 aa)) folds into the SH2 domain. Residues Lys601, Lys615, and Lys631 each carry the allysine; alternate modification. N6-acetyllysine; alternate is present on residues Lys601, Lys615, and Lys631. Phosphotyrosine; by TYK2 is present on Tyr640. Allysine; alternate is present on Lys685. Residue Lys685 is modified to N6-acetyllysine; alternate. Pro704 carries the post-translational modification Phosphotyrosine. Position 705 is a phosphotyrosine; by FER and PTK6 (Tyr705). Lys707 bears the N6-acetyllysine mark. The residue at position 714 (Thr714) is a Phosphothreonine. Ser727 is modified (phosphoserine; by DYRK2, NLK, NEK6, IRAK1, RPS6KA5, ZIPK/DAPK3 and PKC/PRKCE).

Belongs to the transcription factor STAT family. As to quaternary structure, forms a homodimer or a heterodimer with a related family member (at least STAT1). Component of a promoter-binding complex composed of STAT3, NFATC3 and NFATC4; complex formation is enhanced by calcineurin. Interacts with IL31RA, NCOA1, PELP1, SIPAR, SOCS7, STATIP1 and TMF1. Interacts with IL23R in presence of IL23. Interacts (via SH2 domain) with NLK. Interacts with ARL2BP; the interaction is enhanced by LIF and JAK1 expression. Interacts with KPNA4 and KPNA5; KPNA4 may be the primary mediator of nuclear import. Interacts with CAV2; the interaction is increased on insulin-induced tyrosine phosphorylation of CAV2 and leads to STAT3 activation. Interacts with ARL2BP; interaction is enhanced with ARL2. Interacts with NEK6. Binds to CDK9 when activated and nuclear. Interacts with BMX. Interacts with ZIPK/DAPK3. Interacts with PIAS3; the interaction occurs on stimulation by IL6, CNTF or OSM and inhibits the DNA binding activity of STAT3. In prostate cancer cells, interacts with PRKCE and promotes DNA binding activity of STAT3. Interacts with STMN3, antagonizing its microtubule-destabilizing activity. Interacts with the 'Lys-129' acetylated form of BIRC5/survivin. Interacts with FER. Interacts (via SH2 domain) with EIF2AK2/PKR (via the kinase catalytic domain). Interacts with INPP5F; the interaction is independent of STAT3 Tyr-705 phosphorylation status. Interacts with FGFR4. Interacts with OCIAD1. Interacts with OCIAD2. Interacts (unphosphorylated or phosphorylated at Ser-727) with PHB1. Interacts and may form heterodimers with NHLH1. Found in a complex with SLC39A6, SLC39A10 and with the 'Ser-727' phosphorylated form of STAT3 throughout mitosis. Interacts (when phosphorylated at Tyr-705) with CD274/PD-L1; promoting nuclear translocation of CD274/PD-L1. Interacts (when acetylated) with EP300 (via bromo domain); interaction takes place following STAT3 acetylation by EP300 and promotes enhanceosome assembly. Interacts (when acetylated) with BRD2 (via bromo domain); interaction promotes STAT3 recruitment to chromatin and T-helper Th17 cell differentiation. Interacts with FAM220A/SIPAR; the interaction occurs in both the nucleus and the cytoplasm, is enhanced by IL6 and promotes STAT3 dephosphorylation. Interacts in both unphosphorylated and phosphorylated forms with FAM220A but interacts preferentially in the phosphorylated form in the nucleus. Interacts with PTPN2; the interaction is promoted by FAM220A and leads to STAT3 dephosphorylation which negatively regulates STAT3 transcriptional activator activity. (Microbial infection) Interacts with HCV core protein. In terms of assembly, (Microbial infection) Interacts with S.typhimurium SarA. As to quaternary structure, (Microbial infection) Interacts with human cytomegalovirus (HHV-5) immediate early protein IE1; this interaction leads to STAT3 nuclear accumulation and disruption of IL6-induced STAT3 phosphorylation. In terms of processing, tyrosine phosphorylated upon stimulation with EGF. Tyrosine phosphorylated in response to constitutively activated FGFR1, FGFR2, FGFR3 and FGFR4. Activated through tyrosine phosphorylation by BMX. Tyrosine phosphorylated in response to IL6, IL11, LIF, CNTF, KITLG/SCF, CSF1, EGF, PDGF, IFN-alpha, LEP and OSM. Activated KIT promotes phosphorylation on tyrosine residues and subsequent translocation to the nucleus. Phosphorylated on serine upon DNA damage, probably by ATM or ATR. Serine phosphorylation is important for the formation of stable DNA-binding STAT3 homodimers and maximal transcriptional activity. ARL2BP may participate in keeping the phosphorylated state of STAT3 within the nucleus. Upon LPS challenge, phosphorylated within the nucleus by IRAK1. Upon erythropoietin treatment, phosphorylated on Ser-727 by RPS6KA5. Dephosphorylation on tyrosine residues by PTPN2 negatively regulates IL6/interleukin-6 signaling. Phosphorylation at Tyr-705 by PTK6, isoform M2 of PKM (PKM2) or FER leads to an increase of its transcriptional activity. Phosphorylation at Tyr-705 is increased in the presence of calcineurin. Phosphorylation at Tyr-640 by TYK2 negatively regulates transcriptional activity. Acetylated on lysine residues by EP300/p300, promoting its activation. Acetylation at Lys-49 and Lys-87 by EP300/p300 promotes its activation. Acetylation at Lys-87 by EP300/p300 promotes its association with BRD2 and recruitment to chromatin. Deacetylated at Lys-49 and Lys-87 by HDAC1. Acetylation at Lys-685 by EP300/p300 promotes its homodimerization and activation. Deacetylated at Lys-685 by HDAC3. Acetylated on lysine residues by CREBBP. Deacetylation by LOXL3 leads to disrupt STAT3 dimerization and inhibit STAT3 transcription activity. Oxidation of lysine residues to allysine on STAT3 preferentially takes place on lysine residues that are acetylated. Post-translationally, some lysine residues are oxidized to allysine by LOXL3, leading to disrupt STAT3 dimerization and inhibit STAT3 transcription activity. Oxidation of lysine residues to allysine on STAT3 preferentially takes place on lysine residues that are acetylated. In terms of processing, (Microbial infection) Phosphorylated on Tyr-705 in the presence of S.typhimurium SarA. Heart, brain, placenta, lung, liver, skeletal muscle, kidney and pancreas. Expressed in naive CD4(+) T cells as well as T-helper Th17, Th1 and Th2 cells.

It localises to the cytoplasm. The protein localises to the nucleus. Functionally, signal transducer and transcription activator that mediates cellular responses to interleukins, KITLG/SCF, LEP and other growth factors. Once activated, recruits coactivators, such as NCOA1 or MED1, to the promoter region of the target gene. May mediate cellular responses to activated FGFR1, FGFR2, FGFR3 and FGFR4. Upon activation of IL6ST/gp130 signaling by interleukin-6 (IL6), binds to the IL6-responsive elements identified in the promoters of various acute-phase protein genes. Activated by IL31 through IL31RA. Acts as a regulator of inflammatory response by regulating differentiation of naive CD4(+) T-cells into T-helper Th17 or regulatory T-cells (Treg): acetylation promotes its transcription activity and cell differentiation while deacetylation and oxidation of lysine residues by LOXL3 inhibits differentiation. Involved in cell cycle regulation by inducing the expression of key genes for the progression from G1 to S phase, such as CCND1. Mediates the effects of LEP on melanocortin production, body energy homeostasis and lactation. May play an apoptotic role by transctivating BIRC5 expression under LEP activation. Cytoplasmic STAT3 represses macroautophagy by inhibiting EIF2AK2/PKR activity. Plays a crucial role in basal beta cell functions, such as regulation of insulin secretion. Following JAK/STAT signaling activation and as part of a complex with NFATC3 and NFATC4, binds to the alpha-beta E4 promoter region of CRYAB and activates transcription in cardiomyocytes. This Homo sapiens (Human) protein is Signal transducer and activator of transcription 3.